A 244-amino-acid polypeptide reads, in one-letter code: Ribonuclease 3 (244 aa).

Residues 5-136 enclose the RNase III domain; it reads LAELERAIGI…LVGAIYLDQG (132 aa). Glu49 is a binding site for Mg(2+). The active site involves Asp53. Residues Asp122 and Glu125 each coordinate Mg(2+). Residue Glu125 is part of the active site. The region spanning 161–229 is the DRBM domain; it reads DPTTRLQELM…ARKALAAWDK (69 aa).

It belongs to the ribonuclease III family. Homodimer. It depends on Mg(2+) as a cofactor.

The protein resides in the cytoplasm. The catalysed reaction is Endonucleolytic cleavage to 5'-phosphomonoester.. Digests double-stranded RNA. Involved in the processing of primary rRNA transcript to yield the immediate precursors to the large and small rRNAs (23S and 16S). Processes some mRNAs, and tRNAs when they are encoded in the rRNA operon. Processes pre-crRNA and tracrRNA of type II CRISPR loci if present in the organism. The sequence is that of Ribonuclease 3 from Chloroflexus aurantiacus (strain ATCC 29364 / DSM 637 / Y-400-fl).